The sequence spans 874 residues: Alanine--tRNA ligase (874 aa).

Zn(2+) contacts are provided by H562, H566, C664, and H668.

Belongs to the class-II aminoacyl-tRNA synthetase family. Requires Zn(2+) as cofactor.

The protein localises to the cytoplasm. The catalysed reaction is tRNA(Ala) + L-alanine + ATP = L-alanyl-tRNA(Ala) + AMP + diphosphate. In terms of biological role, catalyzes the attachment of alanine to tRNA(Ala) in a two-step reaction: alanine is first activated by ATP to form Ala-AMP and then transferred to the acceptor end of tRNA(Ala). Also edits incorrectly charged Ser-tRNA(Ala) and Gly-tRNA(Ala) via its editing domain. In Shewanella sp. (strain ANA-3), this protein is Alanine--tRNA ligase.